A 258-amino-acid chain; its full sequence is Ribonuclease HII (258 aa).

The RNase H type-2 domain maps to 71–258 (ELIAGIDEVG…PIKSMVNFKY (188 aa)). The a divalent metal cation site is built by aspartate 77, glutamate 78, and aspartate 169.

The protein belongs to the RNase HII family. Requires Mn(2+) as cofactor. Mg(2+) serves as cofactor.

It localises to the cytoplasm. It catalyses the reaction Endonucleolytic cleavage to 5'-phosphomonoester.. Functionally, endonuclease that specifically degrades the RNA of RNA-DNA hybrids. In Lactococcus lactis subsp. cremoris (strain SK11), this protein is Ribonuclease HII.